A 469-amino-acid chain; its full sequence is Cytochrome P450 85A1 (469 aa).

Residues 1–21 (MVLVAIGVVVAAAVVVSSLLL) traverse the membrane as a helical segment. Position 419 (Cys-419) interacts with heme.

The protein belongs to the cytochrome P450 family. Heme serves as cofactor. In terms of tissue distribution, expressed at low levels in all the tissues, but preferentially in the leaf sheath.

The protein resides in the membrane. The catalysed reaction is 6-deoxoteasterone + reduced [NADPH--hemoprotein reductase] + O2 = 6alpha-hydroxyteasterone + oxidized [NADPH--hemoprotein reductase] + H2O + H(+). The enzyme catalyses 6alpha-hydroxytyphasterol + reduced [NADPH--hemoprotein reductase] + O2 = teasterone + oxidized [NADPH--hemoprotein reductase] + 2 H2O + H(+). It catalyses the reaction 3-dehydro-6-deoxoteasterone + reduced [NADPH--hemoprotein reductase] + O2 = 3-dehydro-6alpha-hydroxyteasterone + oxidized [NADPH--hemoprotein reductase] + H2O + H(+). It carries out the reaction 3-dehydro-6alpha-hydroxyteasterone + reduced [NADPH--hemoprotein reductase] + O2 = 3-dehydroteasterone + oxidized [NADPH--hemoprotein reductase] + 2 H2O + H(+). The catalysed reaction is 6-deoxotyphasterol + reduced [NADPH--hemoprotein reductase] + O2 = 6alpha-hydroxytyphasterol + oxidized [NADPH--hemoprotein reductase] + H2O + H(+). The enzyme catalyses 6alpha-hydroxytyphasterol + reduced [NADPH--hemoprotein reductase] + O2 = typhasterol + oxidized [NADPH--hemoprotein reductase] + 2 H2O + H(+). It catalyses the reaction 3-dehydro-6-deoxoteasterone + 2 reduced [NADPH--hemoprotein reductase] + 2 O2 = 3-dehydroteasterone + 2 oxidized [NADPH--hemoprotein reductase] + 3 H2O + 2 H(+). It carries out the reaction 6-deoxoteasterone + 2 reduced [NADPH--hemoprotein reductase] + 2 O2 = teasterone + 2 oxidized [NADPH--hemoprotein reductase] + 3 H2O + 2 H(+). The catalysed reaction is 6-deoxotyphasterol + 2 reduced [NADPH--hemoprotein reductase] + 2 O2 = typhasterol + 2 oxidized [NADPH--hemoprotein reductase] + 3 H2O + 2 H(+). It functions in the pathway plant hormone biosynthesis; brassinosteroid biosynthesis. Catalyzes the C6-oxidation step in brassinosteroids biosynthesis. May convert 6-deoxoteasterone (6-deoxoTE) to teasterone (TE), 3-dehydro-6-deoxoteasterone (6-deoxo3DT, 6-deoxo3DHT) to 3-dehydroteasterone (3DT, 3-DHT), and 6-deoxotyphasterol (6-deoxoTY) to typhasterol (TY). Involved in the organization and elongation of the leaf and stem cells. Not able to convert 6-deoxocastasterone (6-deoxoCS) and castasterone (CS) to brassinolide (BL). The sequence is that of Cytochrome P450 85A1 from Oryza sativa subsp. japonica (Rice).